The primary structure comprises 338 residues: Phenylalanine--tRNA ligase alpha subunit (338 aa).

Residue Glu-252 participates in Mg(2+) binding.

It belongs to the class-II aminoacyl-tRNA synthetase family. Phe-tRNA synthetase alpha subunit type 1 subfamily. Tetramer of two alpha and two beta subunits. It depends on Mg(2+) as a cofactor.

The protein resides in the cytoplasm. It carries out the reaction tRNA(Phe) + L-phenylalanine + ATP = L-phenylalanyl-tRNA(Phe) + AMP + diphosphate + H(+). The polypeptide is Phenylalanine--tRNA ligase alpha subunit (Pseudomonas fluorescens (strain ATCC BAA-477 / NRRL B-23932 / Pf-5)).